A 358-amino-acid chain; its full sequence is UDP-N-acetylglucosamine--N-acetylmuramyl-(pentapeptide) pyrophosphoryl-undecaprenol N-acetylglucosamine transferase (358 aa).

UDP-N-acetyl-alpha-D-glucosamine-binding positions include 11-13, Asn124, Arg164, Ser195, and Gln291; that span reads TGG.

This sequence belongs to the glycosyltransferase 28 family. MurG subfamily.

It is found in the cell inner membrane. It catalyses the reaction di-trans,octa-cis-undecaprenyl diphospho-N-acetyl-alpha-D-muramoyl-L-alanyl-D-glutamyl-meso-2,6-diaminopimeloyl-D-alanyl-D-alanine + UDP-N-acetyl-alpha-D-glucosamine = di-trans,octa-cis-undecaprenyl diphospho-[N-acetyl-alpha-D-glucosaminyl-(1-&gt;4)]-N-acetyl-alpha-D-muramoyl-L-alanyl-D-glutamyl-meso-2,6-diaminopimeloyl-D-alanyl-D-alanine + UDP + H(+). Its pathway is cell wall biogenesis; peptidoglycan biosynthesis. Functionally, cell wall formation. Catalyzes the transfer of a GlcNAc subunit on undecaprenyl-pyrophosphoryl-MurNAc-pentapeptide (lipid intermediate I) to form undecaprenyl-pyrophosphoryl-MurNAc-(pentapeptide)GlcNAc (lipid intermediate II). The sequence is that of UDP-N-acetylglucosamine--N-acetylmuramyl-(pentapeptide) pyrophosphoryl-undecaprenol N-acetylglucosamine transferase from Leptospira interrogans serogroup Icterohaemorrhagiae serovar copenhageni (strain Fiocruz L1-130).